The sequence spans 156 residues: Small ribosomal subunit protein uS7 (156 aa).

This sequence belongs to the universal ribosomal protein uS7 family. As to quaternary structure, part of the 30S ribosomal subunit. Contacts proteins S9 and S11.

Functionally, one of the primary rRNA binding proteins, it binds directly to 16S rRNA where it nucleates assembly of the head domain of the 30S subunit. Is located at the subunit interface close to the decoding center, probably blocks exit of the E-site tRNA. This Campylobacter jejuni subsp. jejuni serotype O:6 (strain 81116 / NCTC 11828) protein is Small ribosomal subunit protein uS7.